The chain runs to 113 residues: MKHLAAYLLLGLGGNTSPSAADVKAVLESVGIEADSDRLDKLISELEGKDINELIASGSEKLASVPSGGAGGAAASGGAAAAGGSAQAEAAPEAAKEEEKEESDEDMGFGLFD.

Positions 62–113 (LASVPSGGAGGAAASGGAAAAGGSAQAEAAPEAAKEEEKEESDEDMGFGLFD) are disordered. Residues 76–93 (SGGAAAAGGSAQAEAAPE) are compositionally biased toward low complexity. A Phosphoserine modification is found at Ser103.

The protein belongs to the eukaryotic ribosomal protein P1/P2 family. P1 and P2 exist as dimers at the large ribosomal subunit.

Functionally, plays an important role in the elongation step of protein synthesis. The sequence is that of Large ribosomal subunit protein P2 (ALTA5) from Alternaria alternata (Alternaria rot fungus).